The sequence spans 470 residues: Beta-Ala-Xaa dipeptidase (470 aa).

Position 87 (histidine 87) interacts with Zn(2+). The active site involves aspartate 89. Aspartate 119 contributes to the Zn(2+) binding site. The active-site Proton acceptor is the glutamate 153. Glutamate 154 and aspartate 177 together coordinate Zn(2+). Arginine 350 provides a ligand contact to substrate. Histidine 439 is a Zn(2+) binding site.

Belongs to the peptidase M20A family. Zn(2+) serves as cofactor.

It is found in the cytoplasm. Fully inhibited by 1,10-phenanthroline or EDTA. Is a relatively unspecific dipeptidase cleaving a variety of dipeptides, notably those with an N-terminal beta-Ala or D-Ala residue, e.g. carnosine (beta-Ala-His). To a lesser extent, also shows aminopeptidase activity, since it is able to catalyze the removal of the N-terminal amino acid from a few distinct tripeptides. In Lactobacillus delbrueckii subsp. lactis, this protein is Beta-Ala-Xaa dipeptidase (pepV).